The primary structure comprises 89 residues: MATANINKSEIIAKFARGTNDTGSPEVQVALLTTRINELTPHFKANMKDHHSRRGLLRMVSRRRRLLDYLKASDADRYRALIEALGLRK.

It belongs to the universal ribosomal protein uS15 family. In terms of assembly, part of the 30S ribosomal subunit. Forms a bridge to the 50S subunit in the 70S ribosome, contacting the 23S rRNA.

Its function is as follows. One of the primary rRNA binding proteins, it binds directly to 16S rRNA where it helps nucleate assembly of the platform of the 30S subunit by binding and bridging several RNA helices of the 16S rRNA. In terms of biological role, forms an intersubunit bridge (bridge B4) with the 23S rRNA of the 50S subunit in the ribosome. The chain is Small ribosomal subunit protein uS15 from Cupriavidus metallidurans (strain ATCC 43123 / DSM 2839 / NBRC 102507 / CH34) (Ralstonia metallidurans).